We begin with the raw amino-acid sequence, 401 residues long: UPF0283 membrane protein SO_1811 (401 aa).

The segment at 1–22 is disordered; it reads MSVELLPHSTEPHANGADKSVS. 3 consecutive transmembrane segments (helical) span residues 99–119, 129–149, and 239–259; these read LARL…VLGL, LFSF…VGVI, and ESAV…IILW.

It belongs to the UPF0283 family.

The protein resides in the cell inner membrane. The polypeptide is UPF0283 membrane protein SO_1811 (Shewanella oneidensis (strain ATCC 700550 / JCM 31522 / CIP 106686 / LMG 19005 / NCIMB 14063 / MR-1)).